Reading from the N-terminus, the 427-residue chain is MSILSERQKDDLNKSIAEYLYAQDLTEIADSLCARLSLDYKSEPNSKYAGLLEKKWVSVIRLQKKLIESENRYTALQEDIAAGPARRRDAQVDWLPTAPARYTLTSHRAPITRVAFHPTFSLLASASEDTTVKIWDWETGSFERTLKGHTREVWGVDFDSKGSFLATCSSDLSIKVWDTQQWDNAGYSGKTLRGHEHTVSTVKFLPGDDLIASASRDKTIRIWEVATTFCIRTITGHEDWVRMTVPSTDGTLLGSCSSDNTARVWDPTSGVMKMEFRGHGHIVEVIAFAPLASYAAIRELAGLKAATKAPGAYIATGSRDKTVKIWDVHSGQELRTVSGHNDWIRGLVFHPSGKHLLSASDDKTIRVWELSTGRCMXVVEAHSHFITCLAWGPPVSAVARVELPRTPFCGDPKPIASRIMEEFNPRP.

The LisH domain maps to 8–40 (QKDDLNKSIAEYLYAQDLTEIADSLCARLSLDY). Positions 58-82 (SVIRLQKKLIESENRYTALQEDIAA) form a coiled coil. 7 WD repeats span residues 106–147 (SHRA…RTLK), 149–187 (HTREVWGVDFDSKGSFLATCSSDLSIKVWDTQQWDNAGY), 194–233 (GHEHTVSTVKFLPGDDLIASASRDKTIRIWEVATTFCIRT), 236–275 (GHEDWVRMTVPSTDGTLLGSCSSDNTARVWDPTSGVMKME), 278–336 (GHGH…ELRT), 339–378 (GHNDWIRGLVFHPSGKHLLSASDDKTIRVWELSTGRCMXV), and 381–420 (AHSHFITCLAWGPPVSAVARVELPRTPFCGDPKPIASRIM).

It belongs to the WD repeat LIS1/nudF family. As to quaternary structure, self-associates. Interacts with NDL1 and dynein.

The protein resides in the cytoplasm. It localises to the cytoskeleton. The protein localises to the spindle pole. Functionally, positively regulates the activity of the minus-end directed microtubule motor protein dynein. May enhance dynein-mediated microtubule sliding by targeting dynein to the microtubule plus end. Required for nuclear migration during vegetative growth as well as development. Required for retrograde early endosome (EE) transport from the hyphal tip. Required for localization of dynein to the mitotic spindle poles. Recruits additional proteins to the dynein complex at SPBs. This is Nuclear distribution protein PAC1-2 from Postia placenta (strain ATCC 44394 / Madison 698-R) (Brown rot fungus).